The chain runs to 702 residues: Lipase maturation factor 2 (702 aa).

10 consecutive transmembrane segments (helical) span residues L10 to I30, A75 to L95, F102 to L122, Y123 to L143, D164 to V184, L226 to I246, L259 to V279, L316 to L336, V363 to L383, and F396 to S416. Residue N488 is glycosylated (N-linked (GlcNAc...) asparagine). Residues Q628 to I648 form a helical membrane-spanning segment. The disordered stretch occupies residues L660 to K702. Residues Q665–A681 are compositionally biased toward basic and acidic residues. Positions V682–S695 are enriched in polar residues.

This sequence belongs to the lipase maturation factor family.

It is found in the endoplasmic reticulum membrane. Involved in the maturation of specific proteins in the endoplasmic reticulum. May be required for maturation and transport of active lipoprotein lipase (LPL) through the secretory pathway. The chain is Lipase maturation factor 2 (Lmf2) from Rattus norvegicus (Rat).